The sequence spans 357 residues: Fluoren-9-ol dehydrogenase (357 aa).

Residues 36–67 (VTGG…TWDD) and aspartate 87 contribute to the NADP(+) site. Tyrosine 198 acts as the Proton acceptor in catalysis. NADP(+) is bound at residue lysine 202.

Belongs to the short-chain dehydrogenases/reductases (SDR) family.

It carries out the reaction 9H-fluoren-9-ol + NADP(+) = 9H-fluoren-9-one + NADPH + H(+). The catalysed reaction is 9H-fluoren-9-ol + NAD(+) = 9H-fluoren-9-one + NADH + H(+). Its pathway is aromatic compound metabolism. Catalyzes the dehydrogenation of both 9-fluorenol and 1,1a-dihydroxy-1-hydro-9-fluorenone to produce 9-fluorenone and 2'-carboxy-2,3- dihydroxybiphenyl, respectively. The protein is Fluoren-9-ol dehydrogenase of Terrabacter sp. (strain DBF63).